Reading from the N-terminus, the 155-residue chain is UPF0178 protein Clos_2709 (155 aa).

It belongs to the UPF0178 family.

This Alkaliphilus oremlandii (strain OhILAs) (Clostridium oremlandii (strain OhILAs)) protein is UPF0178 protein Clos_2709.